A 271-amino-acid polypeptide reads, in one-letter code: Orotidine 5'-phosphate decarboxylase (271 aa).

Lys-95 serves as the catalytic Proton donor.

Belongs to the OMP decarboxylase family. Type 2 subfamily.

It catalyses the reaction orotidine 5'-phosphate + H(+) = UMP + CO2. The protein operates within pyrimidine metabolism; UMP biosynthesis via de novo pathway; UMP from orotate: step 2/2. The chain is Orotidine 5'-phosphate decarboxylase (pyrF) from Ralstonia nicotianae (strain ATCC BAA-1114 / GMI1000) (Ralstonia solanacearum).